The chain runs to 362 residues: Holliday junction branch migration complex subunit RuvB (362 aa).

The large ATPase domain (RuvB-L) stretch occupies residues Met-1–Tyr-183. ATP-binding positions include Leu-22, Arg-23, Gly-64, Lys-67, Thr-68, Thr-69, Glu-130–Phe-132, Arg-173, Tyr-183, and Arg-220. Thr-68 contributes to the Mg(2+) binding site. The tract at residues Ser-184–Glu-254 is small ATPAse domain (RuvB-S). Residues Lys-257–Gln-362 are head domain (RuvB-H). DNA is bound by residues Arg-312 and Arg-317.

Belongs to the RuvB family. As to quaternary structure, homohexamer. Forms an RuvA(8)-RuvB(12)-Holliday junction (HJ) complex. HJ DNA is sandwiched between 2 RuvA tetramers; dsDNA enters through RuvA and exits via RuvB. An RuvB hexamer assembles on each DNA strand where it exits the tetramer. Each RuvB hexamer is contacted by two RuvA subunits (via domain III) on 2 adjacent RuvB subunits; this complex drives branch migration. In the full resolvosome a probable DNA-RuvA(4)-RuvB(12)-RuvC(2) complex forms which resolves the HJ.

It is found in the cytoplasm. The catalysed reaction is ATP + H2O = ADP + phosphate + H(+). The RuvA-RuvB-RuvC complex processes Holliday junction (HJ) DNA during genetic recombination and DNA repair, while the RuvA-RuvB complex plays an important role in the rescue of blocked DNA replication forks via replication fork reversal (RFR). RuvA specifically binds to HJ cruciform DNA, conferring on it an open structure. The RuvB hexamer acts as an ATP-dependent pump, pulling dsDNA into and through the RuvAB complex. RuvB forms 2 homohexamers on either side of HJ DNA bound by 1 or 2 RuvA tetramers; 4 subunits per hexamer contact DNA at a time. Coordinated motions by a converter formed by DNA-disengaged RuvB subunits stimulates ATP hydrolysis and nucleotide exchange. Immobilization of the converter enables RuvB to convert the ATP-contained energy into a lever motion, pulling 2 nucleotides of DNA out of the RuvA tetramer per ATP hydrolyzed, thus driving DNA branch migration. The RuvB motors rotate together with the DNA substrate, which together with the progressing nucleotide cycle form the mechanistic basis for DNA recombination by continuous HJ branch migration. Branch migration allows RuvC to scan DNA until it finds its consensus sequence, where it cleaves and resolves cruciform DNA. This Arthrobacter sp. (strain FB24) protein is Holliday junction branch migration complex subunit RuvB.